The primary structure comprises 241 residues: Small ribosomal subunit protein uS2 (241 aa).

It belongs to the universal ribosomal protein uS2 family.

This Pectobacterium carotovorum subsp. carotovorum (strain PC1) protein is Small ribosomal subunit protein uS2.